The chain runs to 156 residues: Iron sulfur cluster assembly protein 2, mitochondrial (156 aa).

The N-terminal 26 residues, 1–26 (MFARLANPAHFKPLTGSHITRAAKRL), are a transit peptide targeting the mitochondrion.

The protein belongs to the NifU family. Component of the core Fe-S cluster (ISC) assembly machinery. Interacts with frataxin. Interacts with the mitochondrial co-chaperones JAC1 and SSQ1. Interacts with NFS1. Interacts with ferredoxin YAH1; interacts with the reduced form. [2Fe-2S] cluster is required as a cofactor.

The protein resides in the mitochondrion matrix. It participates in cofactor biosynthesis; iron-sulfur cluster biosynthesis. Scaffold protein for the de novo synthesis of iron-sulfur (Fe-S) clusters within mitochondria, which is required for maturation of both mitochondrial and cytoplasmic [2Fe-2S] and [4Fe-4S] proteins. First, a [2Fe-2S] cluster is transiently assembled on the scaffold proteins ISU1 and ISU2. In a second step, the cluster is released from ISU1/ISU2, transferred to glutaredoxin GRX5, followed by the formation of mitochondrial [2Fe-2S] proteins, the synthesis of [4Fe-4S] clusters and their target-specific insertion into the recipient apoproteins. Cluster assembly on ISU1/ISU2 depends on the function of the cysteine desulfurase complex NFS1-ISD11, which serves as the sulfur donor for cluster synthesis, the iron-binding protein frataxin (YFH1) as the putative iron donor, and the electron transfer chain comprised of ferredoxin reductase ARH1 and ferredoxin YAH1, which receive their electrons from NADH. Fe-S cluster release from ISU1/ISU2 is achieved by interaction with the Hsp70 chaperone SSQ1, assisted by the DnaJ-like co-chaperone JAC1 and the nucleotide exchange factor MGE1. ISU1 is the major isoform in yeast, while ISU2 is not detectable in cells grown to stationary phase. Also involved in production of a sulfur precursor required for thiolation of cytoplasmic tRNAs. In Saccharomyces cerevisiae (strain ATCC 204508 / S288c) (Baker's yeast), this protein is Iron sulfur cluster assembly protein 2, mitochondrial.